The following is a 190-amino-acid chain: dTTP/UTP pyrophosphatase (190 aa).

Aspartate 71 acts as the Proton acceptor in catalysis.

Belongs to the Maf family. YhdE subfamily. The cofactor is a divalent metal cation.

The protein resides in the cytoplasm. It carries out the reaction dTTP + H2O = dTMP + diphosphate + H(+). It catalyses the reaction UTP + H2O = UMP + diphosphate + H(+). Nucleoside triphosphate pyrophosphatase that hydrolyzes dTTP and UTP. May have a dual role in cell division arrest and in preventing the incorporation of modified nucleotides into cellular nucleic acids. This chain is dTTP/UTP pyrophosphatase, found in Xanthomonas campestris pv. campestris (strain ATCC 33913 / DSM 3586 / NCPPB 528 / LMG 568 / P 25).